Reading from the N-terminus, the 350-residue chain is MSTVQTVLGTITPNLLGRTLTHEHVALDFEHFYRPPPPDFECELKAKISMSTLGYVRLYPYSSKENVRFYDGEALEAAKKDVLLYKKHGGGSIVENSSYGLKRNLEFIVELAKSTGVHFIAGTGHYIHAMQDASHASLSVEQMSDLYSKDIITGLQVNGKMVKCGFIGEVASVYPIHDFEKNAIKAAGEIQEVLGCGVSMHPHRVTKAPFEIMRLYLEAGGRADKCVMSHLDRTIFDIDELLEFAKLGCYIQYDLFGTECSFYQLNTSVDMISDGQRIDNLIKLIKEGLVDKLLMSHDIHTKHRLTSYGGHGYHHIHTNILPRMFDRGVTLEQVEQMTVTNPANWLAFDP.

6 residues coordinate a divalent metal cation: H22, H24, E169, H201, H230, and D298.

Belongs to the metallo-dependent hydrolases superfamily. Phosphotriesterase family. The cofactor is a divalent metal cation.

This Drosophila erecta (Fruit fly) protein is Phosphotriesterase-related protein.